Consider the following 148-residue polypeptide: uncharacterized protein (148 aa).

A compositionally biased stretch (basic and acidic residues) spans 97-112; sequence KKLDEQRMPGKPKNTE. The disordered stretch occupies residues 97–126; the sequence is KKLDEQRMPGKPKNTEGSKSTIRKKANVGN.

This is an uncharacterized protein from Caenorhabditis elegans.